Reading from the N-terminus, the 96-residue chain is Dynein light chain roadblock-type 1 (96 aa).

Ala-2 carries the post-translational modification N-acetylalanine.

This sequence belongs to the GAMAD family. As to quaternary structure, homodimer. The cytoplasmic dynein 1 complex consists of two catalytic heavy chains (HCs) and a number of non-catalytic subunits presented by intermediate chains (ICs), light intermediate chains (LICs) and light chains (LCs); the composition seems to vary in respect to the IC, LIC and LC composition. The heavy chain homodimer serves as a scaffold for the probable homodimeric assembly of the respective non-catalytic subunits. The ICs and LICs bind directly to the HC dimer and the LCs assemble on the IC dimer. Interacts with DYNLRB2. Interacts with DYNC1I1 and DYNC1I2. Interacts with RAB6A isoform 1 (GTP-bound); the interaction is direct. Interacts with RAB6A isoform 2 (GDP-bound); the interaction is direct. Interacts with RAB6B (GDP-bound). In terms of tissue distribution, high expression in heart, liver, brain and pancreas; moderate in placenta, skeletal muscle and kidney; low in lung, prostate, testis, small intestine and colon. Isoform 1 expression is up-regulated in 64% hepatocellular carcinoma (HCC) patients.

The protein localises to the cytoplasm. The protein resides in the cytoskeleton. In terms of biological role, acts as one of several non-catalytic accessory components of the cytoplasmic dynein 1 complex that are thought to be involved in linking dynein to cargos and to adapter proteins that regulate dynein function. Cytoplasmic dynein 1 acts as a motor for the intracellular retrograde motility of vesicles and organelles along microtubules. This is Dynein light chain roadblock-type 1 from Homo sapiens (Human).